The following is a 749-amino-acid chain: ATP-dependent zinc metalloprotease FtsH 3 (749 aa).

Over residues Met1–Ala17 the composition is skewed to basic and acidic residues. Positions Met1–Phe67 are disordered. Residues Met1–Gly75 lie on the Cytoplasmic side of the membrane. The chain crosses the membrane as a helical span at residues Ile76–Ala96. Residues Pro97–Ser186 lie on the Extracellular side of the membrane. The chain crosses the membrane as a helical span at residues Leu187 to Phe207. Topologically, residues Leu208–Ala749 are cytoplasmic. Gly281 to Thr288 is a binding site for ATP. His504 is a binding site for Zn(2+). Glu505 is a catalytic residue. Zn(2+) is bound by residues His508 and Asp580. Basic and acidic residues predominate over residues Gly679 to Glu689. The interval Gly679–Ala749 is disordered.

This sequence in the central section; belongs to the AAA ATPase family. It in the C-terminal section; belongs to the peptidase M41 family. In terms of assembly, homohexamer. Requires Zn(2+) as cofactor.

Its subcellular location is the cell membrane. Functionally, acts as a processive, ATP-dependent zinc metallopeptidase for both cytoplasmic and membrane proteins. Plays a role in the quality control of integral membrane proteins. This chain is ATP-dependent zinc metalloprotease FtsH 3, found in Conexibacter woesei (strain DSM 14684 / CCUG 47730 / CIP 108061 / JCM 11494 / NBRC 100937 / ID131577).